Reading from the N-terminus, the 144-residue chain is Large ribosomal subunit protein uL16 (144 aa).

Over residues 1–14 (MLTPKRVKHRKQHR) the composition is skewed to basic residues. A disordered region spans residues 1 to 22 (MLTPKRVKHRKQHRPSLAGKAN).

Belongs to the universal ribosomal protein uL16 family. In terms of assembly, part of the 50S ribosomal subunit.

Functionally, binds 23S rRNA and is also seen to make contacts with the A and possibly P site tRNAs. The chain is Large ribosomal subunit protein uL16 from Syntrophomonas wolfei subsp. wolfei (strain DSM 2245B / Goettingen).